The primary structure comprises 315 residues: Homocysteine S-methyltransferase YbgG (315 aa).

The Hcy-binding domain maps to 2–309 (NPIQHILDTY…ENIQEIAAWA (308 aa)). Positions 229, 294, and 295 each coordinate Zn(2+).

The cofactor is Zn(2+).

The enzyme catalyses S-methyl-L-methionine + L-homocysteine = 2 L-methionine + H(+). This is Homocysteine S-methyltransferase YbgG (ybgG) from Bacillus subtilis (strain 168).